Consider the following 394-residue polypeptide: Argininosuccinate synthase (394 aa).

Residues 7–15 (AYSGGLDTS) and alanine 34 contribute to the ATP site. Positions 85 and 90 each coordinate L-citrulline. Glycine 115 serves as a coordination point for ATP. Positions 117, 121, and 122 each coordinate L-aspartate. Asparagine 121 contributes to the L-citrulline binding site. Arginine 125, serine 176, serine 185, glutamate 261, and tyrosine 273 together coordinate L-citrulline.

It belongs to the argininosuccinate synthase family. Type 1 subfamily. As to quaternary structure, homotetramer.

The protein resides in the cytoplasm. It catalyses the reaction L-citrulline + L-aspartate + ATP = 2-(N(omega)-L-arginino)succinate + AMP + diphosphate + H(+). Its pathway is amino-acid biosynthesis; L-arginine biosynthesis; L-arginine from L-ornithine and carbamoyl phosphate: step 2/3. This Ehrlichia ruminantium (strain Gardel) protein is Argininosuccinate synthase.